Here is a 123-residue protein sequence, read N- to C-terminus: UPF0102 protein MCA0184 (123 aa).

The protein belongs to the UPF0102 family.

The chain is UPF0102 protein MCA0184 from Methylococcus capsulatus (strain ATCC 33009 / NCIMB 11132 / Bath).